The following is a 287-amino-acid chain: MDKVKIALQYIMPKHLLSRLVGKLAAAEMGSVTTAAINWFIKQYKIDMSEAAEPEATAYSCFNDFFTRALKPGIRPLCDDNDYIVHPVDGAVSQLGPIKEGRIFQAKGHDYSSLALLGDQADDAKRFEGGDFATIYLAPKDYHRIHMPIKGTLSKMTYVPGELFSVNPLTAENVPGLFARNERVVAIFETEIGPMAMVLVGATIVASIETVWAGTVTPPTGKKVFTWDYPTEGPNALTLEKGAEMGRFKLGSTVVMLFAKDALDEFADGVEPRSVTRMGQAFAKIED.

Active-site charge relay system; for autoendoproteolytic cleavage activity residues include aspartate 89, histidine 146, and serine 252. Catalysis depends on serine 252, which acts as the Schiff-base intermediate with substrate; via pyruvic acid; for decarboxylase activity. At serine 252 the chain carries Pyruvic acid (Ser); by autocatalysis.

The protein belongs to the phosphatidylserine decarboxylase family. PSD-B subfamily. Prokaryotic type I sub-subfamily. As to quaternary structure, heterodimer of a large membrane-associated beta subunit and a small pyruvoyl-containing alpha subunit. Pyruvate serves as cofactor. Is synthesized initially as an inactive proenzyme. Formation of the active enzyme involves a self-maturation process in which the active site pyruvoyl group is generated from an internal serine residue via an autocatalytic post-translational modification. Two non-identical subunits are generated from the proenzyme in this reaction, and the pyruvate is formed at the N-terminus of the alpha chain, which is derived from the carboxyl end of the proenzyme. The autoendoproteolytic cleavage occurs by a canonical serine protease mechanism, in which the side chain hydroxyl group of the serine supplies its oxygen atom to form the C-terminus of the beta chain, while the remainder of the serine residue undergoes an oxidative deamination to produce ammonia and the pyruvoyl prosthetic group on the alpha chain. During this reaction, the Ser that is part of the protease active site of the proenzyme becomes the pyruvoyl prosthetic group, which constitutes an essential element of the active site of the mature decarboxylase.

Its subcellular location is the cell membrane. It carries out the reaction a 1,2-diacyl-sn-glycero-3-phospho-L-serine + H(+) = a 1,2-diacyl-sn-glycero-3-phosphoethanolamine + CO2. It functions in the pathway phospholipid metabolism; phosphatidylethanolamine biosynthesis; phosphatidylethanolamine from CDP-diacylglycerol: step 2/2. Catalyzes the formation of phosphatidylethanolamine (PtdEtn) from phosphatidylserine (PtdSer). This is Phosphatidylserine decarboxylase proenzyme from Shewanella halifaxensis (strain HAW-EB4).